Here is a 399-residue protein sequence, read N- to C-terminus: MPIRYIDQLADLKDKKVFIRVDFNVPQDSKGNITEDTRITGALPTIRYAIEQGARVILASHLGRPKGEKNEKYSMVPAAKRLSELLGRKVKQASDCFGEEVTREIDAMKSGEVLMLENVRFYPGEEKNDPKFAQQLANGCQVYVNDAFAVSHRAHASVEAITRVIPTVVAGFLMRNEMTFFDKAMQNPVRPLVAILGGAKVSGKLEVLEKLMNKVDKVVIGGGMAFTFLKSMGYSVGASKVEDELLPTAKKIMDKARKKGIMFYLPVDCVVANAFEASATNFITTVQEIPEGWLALDIGPASATLFTETLRDAKTVIWNGPMGVFEMDAFARGTFAVAEAVASAFATTIIGGGDTDSAVRKAGVESKVSYISTGGGAFLELLEGKVLPGVKALDIKVKK.

Substrate-binding positions include 22–24 (DFN), Arg-38, 61–64 (HLGR), Arg-120, and Arg-153. Residues Lys-204, Glu-326, and 352-355 (GGDT) each bind ATP.

Belongs to the phosphoglycerate kinase family. Monomer.

The protein resides in the cytoplasm. It catalyses the reaction (2R)-3-phosphoglycerate + ATP = (2R)-3-phospho-glyceroyl phosphate + ADP. It participates in carbohydrate degradation; glycolysis; pyruvate from D-glyceraldehyde 3-phosphate: step 2/5. The polypeptide is Phosphoglycerate kinase (Pelobacter propionicus (strain DSM 2379 / NBRC 103807 / OttBd1)).